The primary structure comprises 396 residues: MKDKDSLLQNAGINTRLTHIGNDPFDYHGFINPPVVHASTVLFPNARAMETRTQKYTYGTRGTPTTDALCEAIDALEGSAGTILVPSGLAAVTIPFLGFVAAGDHALVVDSVYGPTRHFCDTMLKRLGVEVEYYHPEIGAGIETLFRSNTKLVHTEAPGSNTFEMQDIPAISAVAHRHGAVVMMDNTWATPVYFRPLDHGVDISIHASTKYPSGHSDILLGTVSANAEHWERLKEANGVLGICGAPDDAYQILRGLRTMGLRLERHYESALDIAKWLEGRDDVARVLHPALPSFPSHHLWKRDFKGASGIFSFVLAADGPEKSRAKAHAFLDALRIFGLGYSWGGFESLALHAYLNDRTVAKAPTDGPVIRLQIGIEDVADLKADIERGFAAASAV.

At Lys-210 the chain carries N6-(pyridoxal phosphate)lysine.

Belongs to the trans-sulfuration enzymes family. Pyridoxal 5'-phosphate serves as cofactor.

It carries out the reaction L,L-cystathionine + H2O = L-homocysteine + pyruvate + NH4(+). The enzyme catalyses an S-substituted L-cysteine + H2O = a thiol + pyruvate + NH4(+). It functions in the pathway amino-acid biosynthesis; L-methionine biosynthesis via de novo pathway; L-homocysteine from L-cystathionine: step 1/1. In terms of biological role, catalyzes the cleavage of cystathionine to homocysteine, pyruvate and ammonia during methionine biosynthesis. This chain is Putative cystathionine beta-lyase (metC), found in Rhizobium johnstonii (strain DSM 114642 / LMG 32736 / 3841) (Rhizobium leguminosarum bv. viciae).